We begin with the raw amino-acid sequence, 481 residues long: 2-succinylbenzoate--CoA ligase (481 aa).

It belongs to the ATP-dependent AMP-binding enzyme family. MenE subfamily.

The catalysed reaction is 2-succinylbenzoate + ATP + CoA = 2-succinylbenzoyl-CoA + AMP + diphosphate. Its pathway is quinol/quinone metabolism; 1,4-dihydroxy-2-naphthoate biosynthesis; 1,4-dihydroxy-2-naphthoate from chorismate: step 5/7. It functions in the pathway quinol/quinone metabolism; menaquinone biosynthesis. Converts 2-succinylbenzoate (OSB) to 2-succinylbenzoyl-CoA (OSB-CoA). The sequence is that of 2-succinylbenzoate--CoA ligase from Bacillus cereus (strain Q1).